We begin with the raw amino-acid sequence, 190 residues long: Xanthine phosphoribosyltransferase (190 aa).

Positions 20 and 27 each coordinate xanthine. Residue 128–132 coordinates 5-phospho-alpha-D-ribose 1-diphosphate; sequence ANGQA. Residue K156 coordinates xanthine.

It belongs to the purine/pyrimidine phosphoribosyltransferase family. Xpt subfamily. Homodimer.

Its subcellular location is the cytoplasm. It carries out the reaction XMP + diphosphate = xanthine + 5-phospho-alpha-D-ribose 1-diphosphate. It functions in the pathway purine metabolism; XMP biosynthesis via salvage pathway; XMP from xanthine: step 1/1. Its function is as follows. Converts the preformed base xanthine, a product of nucleic acid breakdown, to xanthosine 5'-monophosphate (XMP), so it can be reused for RNA or DNA synthesis. The chain is Xanthine phosphoribosyltransferase from Pediococcus pentosaceus (strain ATCC 25745 / CCUG 21536 / LMG 10740 / 183-1w).